The following is a 311-amino-acid chain: Pyrimidine-specific ribonucleoside hydrolase RihA (311 aa).

His-240 is an active-site residue.

Belongs to the IUNH family. RihA subfamily.

Its function is as follows. Hydrolyzes cytidine or uridine to ribose and cytosine or uracil, respectively. The protein is Pyrimidine-specific ribonucleoside hydrolase RihA of Salmonella gallinarum (strain 287/91 / NCTC 13346).